We begin with the raw amino-acid sequence, 423 residues long: Adenylosuccinate synthetase (423 aa).

Residues 12-18 (GDEGKGK) and 40-42 (GHT) contribute to the GTP site. Aspartate 13 acts as the Proton acceptor in catalysis. Mg(2+) is bound by residues aspartate 13 and glycine 40. IMP-binding positions include 13–16 (DEGK), 38–41 (NAGH), threonine 129, arginine 143, glutamine 224, threonine 239, and arginine 303. Histidine 41 functions as the Proton donor in the catalytic mechanism. 299–305 (SVTGRQR) contacts substrate. Residues arginine 305, 331 to 333 (KGD), and 412 to 414 (SVG) each bind GTP.

It belongs to the adenylosuccinate synthetase family. As to quaternary structure, homodimer. It depends on Mg(2+) as a cofactor.

The protein resides in the cytoplasm. It catalyses the reaction IMP + L-aspartate + GTP = N(6)-(1,2-dicarboxyethyl)-AMP + GDP + phosphate + 2 H(+). The protein operates within purine metabolism; AMP biosynthesis via de novo pathway; AMP from IMP: step 1/2. Plays an important role in the de novo pathway of purine nucleotide biosynthesis. Catalyzes the first committed step in the biosynthesis of AMP from IMP. The sequence is that of Adenylosuccinate synthetase from Flavobacterium johnsoniae (strain ATCC 17061 / DSM 2064 / JCM 8514 / BCRC 14874 / CCUG 350202 / NBRC 14942 / NCIMB 11054 / UW101) (Cytophaga johnsonae).